The sequence spans 126 residues: Histone H2B type 1-C/E/G (126 aa).

Residues 1 to 12 show a composition bias toward low complexity; the sequence is MPEPAKSAPAPK. Positions 1–36 are disordered; sequence MPEPAKSAPAPKKGSKKAVTKAQKKDGKKRKRSRKE. At Pro2 the chain carries N-acetylproline. ADP-ribosyl glutamic acid is present on Glu3. The residue at position 6 (Lys6) is an N6-(2-hydroxyisobutyryl)lysine; alternate. N6-(beta-hydroxybutyryl)lysine; alternate is present on Lys6. An N6-acetyllysine; alternate modification is found at Lys6. An N6-butyryllysine; alternate modification is found at Lys6. The residue at position 6 (Lys6) is an N6-crotonyllysine; alternate. Lys6 is subject to N6-lactoyllysine; alternate. Lys6 participates in a covalent cross-link: Glycyl lysine isopeptide (Lys-Gly) (interchain with G-Cter in SUMO2); alternate. Position 7 is an ADP-ribosylserine (Ser7). Lys12 bears the N6-(beta-hydroxybutyryl)lysine; alternate mark. An N6-acetyllysine; alternate mark is found at Lys12 and Lys13. N6-crotonyllysine; alternate is present on residues Lys12 and Lys13. Lys12 carries the post-translational modification N6-lactoyllysine; alternate. N6-(2-hydroxyisobutyryl)lysine; alternate is present on Lys13. Position 15 is a phosphoserine; by STK4/MST1 (Ser15). An N6-acetyllysine; alternate mark is found at Lys16, Lys17, Lys21, and Lys24. Residues Lys16, Lys17, Lys21, and Lys24 each carry the N6-crotonyllysine; alternate modification. N6-lactoyllysine; alternate is present on residues Lys16, Lys17, Lys21, and Lys24. N6-glutaryllysine; alternate is present on Lys17. Lys21 and Lys24 each carry N6-(2-hydroxyisobutyryl)lysine; alternate. An N6-(beta-hydroxybutyryl)lysine; alternate modification is found at Lys21. Residue Lys21 is modified to N6-butyryllysine; alternate. Lys21 is covalently cross-linked (Glycyl lysine isopeptide (Lys-Gly) (interchain with G-Cter in SUMO2); alternate). N6-(2-hydroxyisobutyryl)lysine is present on Lys25. Position 35 is an N6-(2-hydroxyisobutyryl)lysine; alternate (Lys35). Residue Lys35 is modified to N6-(beta-hydroxybutyryl)lysine; alternate. The residue at position 35 (Lys35) is an N6-crotonyllysine; alternate. Residue Lys35 is modified to N6-glutaryllysine; alternate. An N6-succinyllysine; alternate modification is found at Lys35. Lys35 participates in a covalent cross-link: Glycyl lysine isopeptide (Lys-Gly) (interchain with G-Cter in ubiquitin); alternate. PolyADP-ribosyl glutamic acid is present on Glu36. Residue Ser37 is modified to Phosphoserine; by AMPK. N6-(2-hydroxyisobutyryl)lysine; alternate occurs at positions 44, 47, and 58. Residue Lys44 is modified to N6-lactoyllysine; alternate. N6-glutaryllysine; alternate occurs at positions 44 and 47. Lys47 carries the N6-methyllysine; alternate modification. N6,N6-dimethyllysine; alternate is present on Lys58. Dimethylated arginine is present on Arg80. Lys86 carries the N6-(2-hydroxyisobutyryl)lysine; alternate modification. At Lys86 the chain carries N6-acetyllysine; alternate. Lys86 is subject to N6-lactoyllysine; alternate. At Lys86 the chain carries N6,N6,N6-trimethyllysine; alternate. Arg87 and Arg93 each carry omega-N-methylarginine. Position 109 is an N6-(2-hydroxyisobutyryl)lysine; alternate (Lys109). Lys109 is subject to N6-(beta-hydroxybutyryl)lysine; alternate. Lys109 bears the N6-lactoyllysine; alternate mark. Lys109 carries the N6-glutaryllysine; alternate modification. Lys109 is subject to N6-methyllysine; alternate. The O-linked (GlcNAc) serine glycan is linked to Ser113. Phosphothreonine is present on Thr116. Lys117 and Lys121 each carry N6-(2-hydroxyisobutyryl)lysine; alternate. Position 117 is an N6-(beta-hydroxybutyryl)lysine; alternate (Lys117). An N6-lactoyllysine; alternate mark is found at Lys117 and Lys121. Lys117 and Lys121 each carry N6-glutaryllysine; alternate. Lys117 and Lys121 each carry N6-succinyllysine; alternate. At Lys117 the chain carries N6-methylated lysine; alternate. Lys121 is covalently cross-linked (Glycyl lysine isopeptide (Lys-Gly) (interchain with G-Cter in ubiquitin); alternate).

The protein belongs to the histone H2B family. The nucleosome is a histone octamer containing two molecules each of H2A, H2B, H3 and H4 assembled in one H3-H4 heterotetramer and two H2A-H2B heterodimers. The octamer wraps approximately 147 bp of DNA. Interacts with VRK1; the interaction is mediated by the nucleosome acidic patch, a cluster of negatively charged residues of H2A and H2B forming a cleft within the nucleosome core. Post-translationally, monoubiquitination at Lys-35 (H2BK34Ub) by the MSL1/MSL2 dimer is required for histone H3 'Lys-4' (H3K4me) and 'Lys-79' (H3K79me) methylation and transcription activation at specific gene loci, such as HOXA9 and MEIS1 loci. Similarly, monoubiquitination at Lys-121 (H2BK120Ub) by the RNF20/40 complex gives a specific tag for epigenetic transcriptional activation and is also prerequisite for histone H3 'Lys-4' and 'Lys-79' methylation. It also functions cooperatively with the FACT dimer to stimulate elongation by RNA polymerase II. H2BK120Ub also acts as a regulator of mRNA splicing: deubiquitination by USP49 is required for efficient cotranscriptional splicing of a large set of exons. Phosphorylated on Ser-15 (H2BS14ph) by STK4/MST1 during apoptosis; which facilitates apoptotic chromatin condensation. Also phosphorylated on Ser-15 in response to DNA double strand breaks (DSBs), and in correlation with somatic hypermutation and immunoglobulin class-switch recombination. Phosphorylation at Ser-37 (H2BS36ph) by AMPK in response to stress promotes transcription. In terms of processing, glcNAcylation at Ser-113 promotes monoubiquitination of Lys-121. It fluctuates in response to extracellular glucose, and associates with transcribed genes. Post-translationally, ADP-ribosylated by PARP1 or PARP2 on Ser-7 (H2BS6ADPr) in response to DNA damage. H2BS6ADPr promotes recruitment of CHD1L. Mono-ADP-ribosylated on Glu-3 (H2BE2ADPr) by PARP3 in response to single-strand breaks. Poly ADP-ribosylation on Glu-36 (H2BE35ADPr) by PARP1 regulates adipogenesis: it inhibits phosphorylation at Ser-37 (H2BS36ph), thereby blocking expression of pro-adipogenetic genes. Crotonylation (Kcr) is specifically present in male germ cells and marks testis-specific genes in post-meiotic cells, including X-linked genes that escape sex chromosome inactivation in haploid cells. Crotonylation marks active promoters and enhancers and confers resistance to transcriptional repressors. It is also associated with post-meiotically activated genes on autosomes. In terms of processing, hydroxybutyrylation of histones is induced by starvation. Post-translationally, lactylated in macrophages by EP300/P300 by using lactoyl-CoA directly derived from endogenous or exogenous lactate, leading to stimulates gene transcription.

It is found in the nucleus. It localises to the chromosome. In terms of biological role, core component of nucleosome. Nucleosomes wrap and compact DNA into chromatin, limiting DNA accessibility to the cellular machineries which require DNA as a template. Histones thereby play a central role in transcription regulation, DNA repair, DNA replication and chromosomal stability. DNA accessibility is regulated via a complex set of post-translational modifications of histones, also called histone code, and nucleosome remodeling. The sequence is that of Histone H2B type 1-C/E/G from Mus musculus (Mouse).